We begin with the raw amino-acid sequence, 921 residues long: Retinoblastoma-associated protein (921 aa).

Disordered regions lie at residues 1 to 31 and 603 to 634; these read MPPK…PPGG and RSPK…QKPQ. Residues 612–634 are compositionally biased toward polar residues; that stretch reads HPQSGTSNPDAQPSATSQTQKPQ. The short motif at 853–869 is the Bipartite nuclear localization signal element; it reads KRSAEPSDAPKPLKRLR. A disordered region spans residues 873–921; it reads EGQDEADGGKHLPQESKFQQKLAEMTSTRTRMQKQKLNDGNDTSANEEK. Polar residues predominate over residues 910-921; that stretch reads NDGNDTSANEEK.

This sequence belongs to the retinoblastoma protein (RB) family. As to quaternary structure, interacts with and sequesters the E2F1 transcription factor, thereby inhibiting E2F1 transcription. Interacts with SUV39H1, KMT5B and KMT5C. In terms of assembly, (Microbial infection) Interacts with, and is inhibited by fowl adenovirus 1 protein GAM-1. In terms of processing, phosphorylated in G1, thereby releasing E2F1 which is then able to activate cell growth. Dephosphorylated at the late M phase. Phosphorylation of domain C promotes interaction between the C-terminal domain C and the Pocket domain, and thereby inhibits interactions with heterodimeric E2F/DP transcription factor complexes.

The protein resides in the nucleus. The protein localises to the cytoplasm. Its function is as follows. Tumor suppressor that is a key regulator of the G1/S transition of the cell cycle. The hypophosphorylated form binds transcription regulators of the E2F family, preventing transcription of E2F-responsive genes. Both physically blocks E2Fs transactivating domain and recruits chromatin-modifying enzymes that actively repress transcription. Cyclin and CDK-dependent phosphorylation of RB1 induces its dissociation from E2Fs, thereby activating transcription of E2F responsive genes and triggering entry into S phase. RB1 also promotes the G0-G1 transition upon phosphorylation and activation by CDK3/cyclin-C. This Gallus gallus (Chicken) protein is Retinoblastoma-associated protein (RB1).